The chain runs to 279 residues: Ribosomal RNA small subunit methyltransferase A (279 aa).

S-adenosyl-L-methionine-binding residues include histidine 15, leucine 17, glycine 42, glutamate 64, aspartate 89, and asparagine 109.

It belongs to the class I-like SAM-binding methyltransferase superfamily. rRNA adenine N(6)-methyltransferase family. RsmA subfamily.

The protein localises to the cytoplasm. The enzyme catalyses adenosine(1518)/adenosine(1519) in 16S rRNA + 4 S-adenosyl-L-methionine = N(6)-dimethyladenosine(1518)/N(6)-dimethyladenosine(1519) in 16S rRNA + 4 S-adenosyl-L-homocysteine + 4 H(+). Specifically dimethylates two adjacent adenosines (A1518 and A1519) in the loop of a conserved hairpin near the 3'-end of 16S rRNA in the 30S particle. May play a critical role in biogenesis of 30S subunits. In Prochlorococcus marinus (strain SARG / CCMP1375 / SS120), this protein is Ribosomal RNA small subunit methyltransferase A.